The following is a 425-amino-acid chain: Pyruvate dehydrogenase E1 component subunit alpha-3, chloroplastic (425 aa).

The transit peptide at 1–66 directs the protein to the chloroplast; sequence MAAASSFTAA…VLPGNKAAPA (66 aa). Pyruvate contacts are provided by His-109, Tyr-135, Arg-136, Ala-184, Ile-186, Asp-224, Gly-225, and Asn-253. Thiamine diphosphate contacts are provided by Tyr-135, Arg-136, Ala-184, Ile-186, Asp-224, Gly-225, Asn-253, and His-322. Residue Asp-224 participates in Mg(2+) binding. Asn-253 serves as a coordination point for Mg(2+).

Tetramer of 2 alpha and 2 beta subunits. It depends on thiamine diphosphate as a cofactor. The cofactor is Mg(2+).

It is found in the plastid. Its subcellular location is the chloroplast. It carries out the reaction N(6)-[(R)-lipoyl]-L-lysyl-[protein] + pyruvate + H(+) = N(6)-[(R)-S(8)-acetyldihydrolipoyl]-L-lysyl-[protein] + CO2. Functionally, the pyruvate dehydrogenase complex catalyzes the overall conversion of pyruvate to acetyl-CoA and CO(2). It contains multiple copies of three enzymatic components: pyruvate dehydrogenase (E1), dihydrolipoamide acetyltransferase (E2) and lipoamide dehydrogenase (E3). This is Pyruvate dehydrogenase E1 component subunit alpha-3, chloroplastic from Oryza sativa subsp. japonica (Rice).